A 528-amino-acid chain; its full sequence is ATP synthase subunit alpha (528 aa).

G169–T176 contributes to the ATP binding site.

The protein belongs to the ATPase alpha/beta chains family. F-type ATPases have 2 components, CF(1) - the catalytic core - and CF(0) - the membrane proton channel. CF(1) has five subunits: alpha(3), beta(3), gamma(1), delta(1), epsilon(1). CF(0) has three main subunits: a(1), b(2) and c(9-12). The alpha and beta chains form an alternating ring which encloses part of the gamma chain. CF(1) is attached to CF(0) by a central stalk formed by the gamma and epsilon chains, while a peripheral stalk is formed by the delta and b chains.

The protein resides in the cell membrane. It carries out the reaction ATP + H2O + 4 H(+)(in) = ADP + phosphate + 5 H(+)(out). Its function is as follows. Produces ATP from ADP in the presence of a proton gradient across the membrane. The alpha chain is a regulatory subunit. The protein is ATP synthase subunit alpha of Mycoplasmopsis agalactiae (strain NCTC 10123 / CIP 59.7 / PG2) (Mycoplasma agalactiae).